The chain runs to 107 residues: Nucleoid-associated protein Pnec_0645 (107 aa).

This sequence belongs to the YbaB/EbfC family. In terms of assembly, homodimer.

It is found in the cytoplasm. The protein localises to the nucleoid. Binds to DNA and alters its conformation. May be involved in regulation of gene expression, nucleoid organization and DNA protection. This Polynucleobacter necessarius subsp. necessarius (strain STIR1) protein is Nucleoid-associated protein Pnec_0645.